The primary structure comprises 259 residues: ATP synthase subunit a (259 aa).

The propeptide at 1-7 (MTNNYIN) is removed in mature form. 5 helical membrane-spanning segments follow: residues 36 to 56 (FSLY…LSIG), 95 to 115 (YVPL…IGMV), 125 to 145 (LIYI…LGLF), 164 to 206 (LVPV…NLVK), and 211 to 253 (INYF…SYLK).

As to quaternary structure, F-type ATP synthases have 2 components, the catalytic core F(1) and the membrane-embedded component F(0), linked together by a central stalk and a peripheral stalk. The central stalk, also called rotor shaft, is often seen as part of F(1). The peripheral stalk is seen as part of F(0). F(0) contains the membrane channel next to the rotor. F-type ATP synthases form dimers but each monomer functions independently in ATP generation. The dimer consists of 18 different polypeptides: ATP1 (subunit alpha, part of F(1), 3 molecules per monomer), ATP2 (subunit beta, part of F(1), 3 molecules per monomer), ATP3 (subunit gamma, part of the central stalk), ATP4 (subunit b, part of the peripheral stalk), ATP5/OSCP (subunit 5/OSCP, part of the peripheral stalk), ATP6 (subunit a, part of the peripheral stalk), ATP7 (subunit d, part of the peripheral stalk), ATP8 (subunit 8, part of the peripheral stalk), OLI1 (subunit c, part of the rotor, 10 molecules per monomer), ATP14 (subunit h, part of the peripheral stalk), ATP15 (subunit epsilon, part of the central stalk), ATP16 (subunit delta, part of the central stalk), ATP17 (subunit f, part of the peripheral stalk), ATP18 (subunit i/j, part of the peripheral stalk). Dimer-specific subunits are ATP19 (subunit k, at interface between monomers), ATP20 (subunit g, at interface between monomers), TIM11 (subunit e, at interface between monomers). Also contains subunit L.

It localises to the mitochondrion inner membrane. Mitochondrial membrane ATP synthase (F(1)F(0) ATP synthase or Complex V) produces ATP from ADP in the presence of a proton gradient across the membrane which is generated by electron transport complexes of the respiratory chain. F-type ATP synthases consist of two structural domains, F(1) - containing the extramembraneous catalytic core, and F(0) - containing the membrane proton channel, linked together by a central stalk and a peripheral stalk. During catalysis, ATP synthesis in the catalytic domain of F(1) is coupled via a rotary mechanism of the central stalk subunits to proton translocation. Key component of the proton channel; it may play a direct role in the translocation of protons across the membrane. The polypeptide is ATP synthase subunit a (Pichia angusta (Yeast)).